The chain runs to 457 residues: Putative metabolite transport protein YwtG (457 aa).

12 consecutive transmembrane segments (helical) span residues 7 to 27, 38 to 58, 75 to 95, 97 to 117, 136 to 156, 163 to 183, 240 to 260, 276 to 296, 309 to 329, 340 to 360, 377 to 397, and 400 to 420; these read IWLY…TGVI, LGLN…GAIL, AIMA…LAPN, GVMV…TTIV, LNQL…YIFA, WMLG…LFMP, ALIA…NTII, ASIL…LVAI, LFGN…NLFF, VICL…VVWV, VSTL…PILM, and IGIS…FLFV. The segment at 438–457 is disordered; that stretch reads DLRDKNGQGGAAGKQQTVGT.

This sequence belongs to the major facilitator superfamily. Sugar transporter (TC 2.A.1.1) family.

The protein localises to the cell membrane. In Bacillus subtilis (strain 168), this protein is Putative metabolite transport protein YwtG (ywtG).